The following is a 254-amino-acid chain: Zinc import ATP-binding protein ZnuC (254 aa).

The ABC transporter domain occupies 5 to 219; that stretch reads VELKEVCLSF…PEFARLFGRP (215 aa). 37-44 contributes to the ATP binding site; it reads GPNGAGKS. The span at 233–242 shows a compositional bias: basic and acidic residues; the sequence is CDGEHHHHEP. The segment at 233–254 is disordered; that stretch reads CDGEHHHHEPQVPVIRLPSRNQ.

Belongs to the ABC transporter superfamily. Zinc importer (TC 3.A.1.15.5) family. As to quaternary structure, the complex is composed of two ATP-binding proteins (ZnuC), two transmembrane proteins (ZnuB) and a solute-binding protein (ZnuA).

It is found in the cell inner membrane. It carries out the reaction Zn(2+)(out) + ATP(in) + H2O(in) = Zn(2+)(in) + ADP(in) + phosphate(in) + H(+)(in). In terms of biological role, part of the ABC transporter complex ZnuABC involved in zinc import. Responsible for energy coupling to the transport system. The chain is Zinc import ATP-binding protein ZnuC from Aeromonas hydrophila subsp. hydrophila (strain ATCC 7966 / DSM 30187 / BCRC 13018 / CCUG 14551 / JCM 1027 / KCTC 2358 / NCIMB 9240 / NCTC 8049).